Reading from the N-terminus, the 84-residue chain is Cell division topological specificity factor (84 aa).

This sequence belongs to the MinE family.

Prevents the cell division inhibition by proteins MinC and MinD at internal division sites while permitting inhibition at polar sites. This ensures cell division at the proper site by restricting the formation of a division septum at the midpoint of the long axis of the cell. The polypeptide is Cell division topological specificity factor (Azotobacter vinelandii (strain DJ / ATCC BAA-1303)).